The following is a 401-amino-acid chain: CLIP domain-containing serine protease B9 (401 aa).

The N-terminal stretch at 1 to 26 (MTSYNRSVAWLTVCVLLALHIGGSHQ) is a signal peptide. The Clip domain maps to 30–85 (QCTTPTRLRGRCISIYECDSILDYFKQRILTWEEREFLRKSQCTGATSGRQPFVCC). 3 cysteine pairs are disulfide-bonded: C31/C84, C41/C72, and C47/C85. N88 carries N-linked (GlcNAc...) asparagine glycosylation. Residues 148-400 (IYGGQNADID…YMAWVRSNIK (253 aa)) form the Peptidase S1 domain. C178 and C194 are disulfide-bonded. Catalysis depends on charge relay system residues H193 and D257. Disulfide bonds link C322–C339 and C349–C376. A glycan (N-linked (GlcNAc...) asparagine) is linked at N330. S353 functions as the Charge relay system in the catalytic mechanism.

It belongs to the peptidase S1 family. CLIP subfamily. Forms a covalent heterodimer with SRPN2; the interaction inhibits CLIPB9 protease activity. Post-translationally, proteolytic cleavage is necessary for activation.

The protein localises to the secreted. With respect to regulation, inhibited by serpin SRPN2. Its function is as follows. Serine protease that functions in the melanization-mediated immune response. Cleaves and activates prophenoloxidase (PPO), which is required for the activation of the prophenoloxidase cascade probably following the recognition of pathogen-derived products. This is CLIP domain-containing serine protease B9 from Anopheles gambiae (African malaria mosquito).